Here is a 313-residue protein sequence, read N- to C-terminus: tRNA dimethylallyltransferase (313 aa).

11–18 (GPTAGGKT) contributes to the ATP binding site. 13–18 (TAGGKT) is a substrate binding site. Interaction with substrate tRNA regions lie at residues 36–39 (DSAL), 160–164 (QRIGR), and 243–248 (RCVGYR).

It belongs to the IPP transferase family. In terms of assembly, monomer. The cofactor is Mg(2+).

The catalysed reaction is adenosine(37) in tRNA + dimethylallyl diphosphate = N(6)-dimethylallyladenosine(37) in tRNA + diphosphate. Catalyzes the transfer of a dimethylallyl group onto the adenine at position 37 in tRNAs that read codons beginning with uridine, leading to the formation of N6-(dimethylallyl)adenosine (i(6)A). The protein is tRNA dimethylallyltransferase of Neisseria meningitidis serogroup C / serotype 2a (strain ATCC 700532 / DSM 15464 / FAM18).